We begin with the raw amino-acid sequence, 323 residues long: MIGTNVIRRNANFLQVIKSYYQLTKPRIIPLLLITTAAAMWIASNGQVDPVLLLVTLLGGTLAAASAQTLNCIYDQDIDYAMLRTRARPIPSGRVRPLHALIFAIILAVLSFTLFVVFVNMASALLAMSGIAFYMLIYTHMLKRHSPQNIVIGGAAGSIPPLVGWAAVTGDLSWAAWALFAIIFLWTPPHFWALALMIKDDYAQVNVPMMPVVEGEESTVEQIWIYTLIVVPFTFILVYPLAASGIVYTLVALVLGGMFIYKTWQLKQNPLDKDLARSLFKYSILYMMLLCTGMVVDSLPMTHEMIAAVGDNLNTLVSLIPLH.

9 helical membrane passes run 28-48, 50-70, 99-119, 122-142, 150-170, 178-198, 223-243, 244-264, and 279-299; these read IIPLLLITTAAAMWIASNGQV, PVLLLVTLLGGTLAAASAQTL, HALIFAIILAVLSFTLFVVFV, ASALLAMSGIAFYMLIYTHML, IVIGGAAGSIPPLVGWAAVTG, ALFAIIFLWTPPHFWALALMI, IWIYTLIVVPFTFILVYPLAA, SGIVYTLVALVLGGMFIYKTW, and LFKYSILYMMLLCTGMVVDSL.

It belongs to the UbiA prenyltransferase family. Protoheme IX farnesyltransferase subfamily.

It localises to the cell inner membrane. It catalyses the reaction heme b + (2E,6E)-farnesyl diphosphate + H2O = Fe(II)-heme o + diphosphate. It functions in the pathway porphyrin-containing compound metabolism; heme O biosynthesis; heme O from protoheme: step 1/1. Converts heme B (protoheme IX) to heme O by substitution of the vinyl group on carbon 2 of heme B porphyrin ring with a hydroxyethyl farnesyl side group. The sequence is that of Protoheme IX farnesyltransferase from Gloeothece citriformis (strain PCC 7424) (Cyanothece sp. (strain PCC 7424)).